The primary structure comprises 162 residues: NADPH-dependent 7-cyano-7-deazaguanine reductase (162 aa).

Cysteine 53 serves as the catalytic Thioimide intermediate. Catalysis depends on aspartate 60, which acts as the Proton donor. Residues 75–77 (VES) and 94–95 (HE) each bind substrate.

It belongs to the GTP cyclohydrolase I family. QueF type 1 subfamily.

It localises to the cytoplasm. The catalysed reaction is 7-aminomethyl-7-carbaguanine + 2 NADP(+) = 7-cyano-7-deazaguanine + 2 NADPH + 3 H(+). The protein operates within tRNA modification; tRNA-queuosine biosynthesis. In terms of biological role, catalyzes the NADPH-dependent reduction of 7-cyano-7-deazaguanine (preQ0) to 7-aminomethyl-7-deazaguanine (preQ1). The polypeptide is NADPH-dependent 7-cyano-7-deazaguanine reductase (Exiguobacterium sibiricum (strain DSM 17290 / CCUG 55495 / CIP 109462 / JCM 13490 / 255-15)).